The primary structure comprises 244 residues: ATP synthase subunit b 2 (244 aa).

The chain crosses the membrane as a helical span at residues Thr-2–Leu-22.

It belongs to the ATPase B chain family. F-type ATPases have 2 components, F(1) - the catalytic core - and F(0) - the membrane proton channel. F(1) has five subunits: alpha(3), beta(3), gamma(1), delta(1), epsilon(1). F(0) has three main subunits: a(1), b(2) and c(10-14). The alpha and beta chains form an alternating ring which encloses part of the gamma chain. F(1) is attached to F(0) by a central stalk formed by the gamma and epsilon chains, while a peripheral stalk is formed by the delta and b chains.

The protein resides in the cell inner membrane. Functionally, f(1)F(0) ATP synthase produces ATP from ADP in the presence of a proton or sodium gradient. F-type ATPases consist of two structural domains, F(1) containing the extramembraneous catalytic core and F(0) containing the membrane proton channel, linked together by a central stalk and a peripheral stalk. During catalysis, ATP synthesis in the catalytic domain of F(1) is coupled via a rotary mechanism of the central stalk subunits to proton translocation. In terms of biological role, component of the F(0) channel, it forms part of the peripheral stalk, linking F(1) to F(0). This is ATP synthase subunit b 2 from Gluconobacter oxydans (strain 621H) (Gluconobacter suboxydans).